The following is a 308-amino-acid chain: Probable GTP 3',8-cyclase (308 aa).

In terms of domain architecture, Radical SAM core spans 4–222 (RFGRPLEDLR…KKLIRKKHFR (219 aa)). Arg13 contributes to the GTP binding site. Residues Cys20, Cys24, and Cys27 each contribute to the [4Fe-4S] cluster site. GTP is bound at residue Lys60. Gly64 serves as a coordination point for S-adenosyl-L-methionine. Thr90 contributes to the GTP binding site. Ser114 contributes to the S-adenosyl-L-methionine binding site. Lys151 serves as a coordination point for GTP. [4Fe-4S] cluster contacts are provided by Cys245 and Cys248. GTP is bound at residue 250–252 (RIR). Position 262 (Cys262) interacts with [4Fe-4S] cluster.

The protein belongs to the radical SAM superfamily. MoaA family. Requires [4Fe-4S] cluster as cofactor.

The catalysed reaction is GTP + AH2 + S-adenosyl-L-methionine = (8S)-3',8-cyclo-7,8-dihydroguanosine 5'-triphosphate + 5'-deoxyadenosine + L-methionine + A + H(+). It participates in cofactor biosynthesis; molybdopterin biosynthesis. In terms of biological role, catalyzes the cyclization of GTP to (8S)-3',8-cyclo-7,8-dihydroguanosine 5'-triphosphate. This Saccharolobus solfataricus (strain ATCC 35092 / DSM 1617 / JCM 11322 / P2) (Sulfolobus solfataricus) protein is Probable GTP 3',8-cyclase.